The following is a 404-amino-acid chain: Propionate kinase (404 aa).

This sequence belongs to the acetokinase family. PduW subfamily.

It is found in the cytoplasm. The enzyme catalyses propanoate + ATP = propanoyl phosphate + ADP. It functions in the pathway polyol metabolism; 1,2-propanediol degradation. Its function is as follows. Works with phosphate acetyltransferase (pta) to capture exogenous propionate and regenerate propionyl-CoA during degradation of 1,2-propanediol (1,2-PD). Functionally, expression of a cosmid containing the full 21-gene pdu operon in E.coli allows E.coli to grow on 1,2-propanediol (1,2-PD) with the appearance of bacterial microcompartments (BMC) in its cytoplasm. This chain is Propionate kinase, found in Citrobacter freundii.